A 145-amino-acid polypeptide reads, in one-letter code: 3-hydroxyacyl-[acyl-carrier-protein] dehydratase FabZ (145 aa).

The active site involves H47.

It belongs to the thioester dehydratase family. FabZ subfamily.

The protein localises to the cytoplasm. The catalysed reaction is a (3R)-hydroxyacyl-[ACP] = a (2E)-enoyl-[ACP] + H2O. Functionally, involved in unsaturated fatty acids biosynthesis. Catalyzes the dehydration of short chain beta-hydroxyacyl-ACPs and long chain saturated and unsaturated beta-hydroxyacyl-ACPs. The chain is 3-hydroxyacyl-[acyl-carrier-protein] dehydratase FabZ from Geotalea uraniireducens (strain Rf4) (Geobacter uraniireducens).